The sequence spans 523 residues: UDP-glucuronosyltransferase 2B16 (523 aa).

The signal sequence occupies residues 1–16 (LLLLLQLSCCFSSGSC). The residue at position 129 (Lys-129) is an N6-succinyllysine. Residue Asn-309 is glycosylated (N-linked (GlcNAc...) asparagine). Residues 487–503 (VIGFLLACLTITTYLVI) form a helical membrane-spanning segment.

It belongs to the UDP-glycosyltransferase family.

Its subcellular location is the microsome membrane. It localises to the endoplasmic reticulum membrane. The catalysed reaction is glucuronate acceptor + UDP-alpha-D-glucuronate = acceptor beta-D-glucuronoside + UDP + H(+). Functionally, UDPGT is of major importance in the conjugation and subsequent elimination of potentially toxic xenobiotics and endogenous compounds. Acts on small phenolic agents such as 2-beta-naphthol and 4-methylumbelliferone as well as bulky phenolic compounds like 2-hydroxy- and 4-hydroxybiphenyl. In contrast to 2B13 it is active toward 4-hydroxyesterone. This is UDP-glucuronosyltransferase 2B16 (UGT2B16) from Oryctolagus cuniculus (Rabbit).